The sequence spans 274 residues: Lipoprotein E (274 aa).

The first 20 residues, 1 to 20 (MKTTLKMTALAALSAFVLAG), serve as a signal peptide directing secretion. Residue Cys-21 is the site of N-palmitoyl cysteine attachment. A lipid anchor (S-diacylglycerol cysteine) is attached at Cys-21.

It is found in the cell outer membrane. The polypeptide is Lipoprotein E (hel) (Haemophilus influenzae (strain ATCC 51907 / DSM 11121 / KW20 / Rd)).